The sequence spans 511 residues: Aminotransferase FGSG_17085 (511 aa).

165–166 (GA) contacts pyridoxal 5'-phosphate. Tyr200 lines the substrate pocket. Asp310 contributes to the pyridoxal 5'-phosphate binding site. Residue Lys339 is modified to N6-(pyridoxal phosphate)lysine. A substrate-binding site is contributed by Gly371. 372–373 (HT) serves as a coordination point for pyridoxal 5'-phosphate.

The protein belongs to the class-III pyridoxal-phosphate-dependent aminotransferase family. It depends on pyridoxal 5'-phosphate as a cofactor.

The protein operates within secondary metabolite biosynthesis. Functionally, aminotransferase; part of the gene cluster that mediates the biosynthesis of the lipopeptide fusaristatin A. Fusaristatin A consists of a polyketide chain linked to three amino acid residues glutamine (Gln), dehydroalanine (dehydro-Ala), and beta-aminoisobutyric acid. The biosynthesis starts with formation of a linear polyketide chain by the highly reducing polyketide synthase PKS6. The gene cluster does not contain an acyl-CoA ligase or an acyl-transferase, and it is therefore predicted that the polyketide is transferred directly to the nonribosomal peptide synthetase NRPS7. Modules 1-3 from NRPS7 incorporate dehydro-Ala, Gln, and beta-aminoisobutyric acid in the compound, which is released by cyclization. The beta-aminoisobutyric acid units are most likely not freely available to the NRPS, but can be synthesized from thymine, which requires a dehydrogenase, a monooxygenase, and an aminotransferase. The fusaristatin A cluster contains a cytochrome P450 monooxygenase (FGSG_08207) and an aminotransferase (FGSG_17085), which theoretically can perform two of the enzymatic steps. The enzymes may however also be involved in biosynthesis of dehydroalanine or modification of the polyketide. The dehydro-Ala residue can be a result of cyclization, where serine is dehydrated. The last gene of the cluster encodes a protein with an A/B barrel domain found in variable enzymes, which hampers functional prediction. This Gibberella zeae (strain ATCC MYA-4620 / CBS 123657 / FGSC 9075 / NRRL 31084 / PH-1) (Wheat head blight fungus) protein is Aminotransferase FGSG_17085.